A 223-amino-acid chain; its full sequence is UPF0441 protein YgiB (223 aa).

Low complexity predominate over residues 178-195 (TVPKTAMAPKPATTTTVT). Residues 178 to 223 (TVPKTAMAPKPATTTTVTRGGFGESVAKQSTMQRSATGTSSRSMGG) form a disordered region. Over residues 204 to 223 (AKQSTMQRSATGTSSRSMGG) the composition is skewed to polar residues.

It belongs to the UPF0441 family.

The chain is UPF0441 protein YgiB from Shigella dysenteriae serotype 1 (strain Sd197).